The chain runs to 79 residues: Sec-independent protein translocase protein TatA (79 aa).

The chain crosses the membrane as a helical span at residues 1–21 (MGGISIWQLLIIALIVILLFG). The tract at residues 42 to 79 (AMTSETSEEEKKALEDSQTAQTSQQAEKKPESKDKEQA) is disordered. Residues 57-66 (DSQTAQTSQQ) show a composition bias toward polar residues. Positions 67-79 (AEKKPESKDKEQA) are enriched in basic and acidic residues.

The protein belongs to the TatA/E family. The Tat system comprises two distinct complexes: a TatABC complex, containing multiple copies of TatA, TatB and TatC subunits, and a separate TatA complex, containing only TatA subunits. Substrates initially bind to the TatABC complex, which probably triggers association of the separate TatA complex to form the active translocon.

It is found in the cell inner membrane. In terms of biological role, part of the twin-arginine translocation (Tat) system that transports large folded proteins containing a characteristic twin-arginine motif in their signal peptide across membranes. TatA could form the protein-conducting channel of the Tat system. The sequence is that of Sec-independent protein translocase protein TatA from Shewanella denitrificans (strain OS217 / ATCC BAA-1090 / DSM 15013).